Consider the following 89-residue polypeptide: YcgL domain-containing protein Asuc_1390 (89 aa).

Residues 1–85 enclose the YcgL domain; the sequence is MLCAIYKSKK…KDDWLFTIEK (85 aa).

This chain is YcgL domain-containing protein Asuc_1390, found in Actinobacillus succinogenes (strain ATCC 55618 / DSM 22257 / CCUG 43843 / 130Z).